The following is a 1189-amino-acid chain: Pyruvate carboxylase (1189 aa).

The Biotin carboxylation domain maps to 21 to 473 (TMNKILVANR…WTTFIDDTPE (453 aa)). The ATP site is built by lysine 139, glutamate 223, and histidine 258. An ATP-grasp domain is found at 143 to 340 (RNLAYAANVP…IVAAQIQIAA (198 aa)). Arginine 315 is an active-site residue. Residues 559-826 (LMIMDTTWRD…ETGIPEANAR (268 aa)) enclose the Pyruvate carboxyltransferase domain. Substrate is bound by residues 567–571 (RDAHQ) and arginine 640. A divalent metal cation is bound at residue aspartate 568. Residues lysine 736, histidine 766, and histidine 768 each contribute to the a divalent metal cation site. Residue lysine 736 is modified to N6-carboxylysine. Threonine 900 provides a ligand contact to substrate. Residues 1099–1174 (KADAHNPNEI…DASDLIPKSS (76 aa)) enclose the Biotinyl-binding domain. Lysine 1140 carries the post-translational modification N6-biotinyllysine.

Biotin is required as a cofactor. Zn(2+) serves as cofactor.

Its subcellular location is the cytoplasm. The enzyme catalyses hydrogencarbonate + pyruvate + ATP = oxaloacetate + ADP + phosphate + H(+). Its pathway is carbohydrate biosynthesis; gluconeogenesis. Pyruvate carboxylase catalyzes a 2-step reaction, involving the ATP-dependent carboxylation of the covalently attached biotin in the first step and the transfer of the carboxyl group to pyruvate in the second. This Komagataella pastoris (Yeast) protein is Pyruvate carboxylase (PYC1).